The sequence spans 119 residues: Membrane-anchored ubiquitin-fold protein 1 (119 aa).

The region spanning 9 to 75 (FEIKFRLPDG…LENNKTLSEC (67 aa)) is the Ubiquitin-like domain. Position 116 is a cysteine methyl ester (Cys-116). Residue Cys-116 is the site of S-farnesyl cysteine attachment. The propeptide at 117–119 (SIM) is removed in mature form.

Its subcellular location is the cell membrane. In terms of biological role, may serve as docking site to facilitate the association of other proteins to the plasma membrane. In Oryza sativa subsp. japonica (Rice), this protein is Membrane-anchored ubiquitin-fold protein 1 (MUB1).